The sequence spans 154 residues: Protein FAM162A (154 aa).

The segment at 76-102 (RFKKEDEIPETVSLEMLDAAKNKMRVK) is required for proapoptotic activity. A helical membrane pass occupies residues 103 to 120 (ISYLMIALTVVGCIFMVI).

The protein belongs to the UPF0389 family. In terms of assembly, interacts with HSP90AB1; HSP90AB1 is essential for FAM162A mitochondrial localization and pro-apoptotic activity. Interacts with VDAC2; the interaction is probably involved in inducing mitochondrial permeability transition.

It localises to the mitochondrion membrane. Proposed to be involved in regulation of apoptosis; the exact mechanism may differ between cell types/tissues. May be involved in hypoxia-induced cell death of transformed cells implicating cytochrome C release and caspase activation (such as CASP9) and inducing mitochondrial permeability transition. May be involved in hypoxia-induced cell death of neuronal cells probably by promoting release of AIFM1 from mitochondria to cytoplasm and its translocation to the nucleus; however, the involvement of caspases has been reported conflictingly. This is Protein FAM162A (FAM162A) from Homo sapiens (Human).